The primary structure comprises 451 residues: MDFSTNDTIAAIATAPGRGGVGIVRVSGIKAAEIAEHVLGKCPKPRYAHYGPFLGAEGQVLDQGIALFFPNPHSFTGENVLELQGHGGPVILQWLLERVVQLGARLAEPGEFSKQAFLNDKLDLAQAEAIADLIDASSQQAARSALRSLQGDFSNQVNELVEQLIQLRIYVEAAIDFPEEEIDFLSDGKVAGQLQHILEQLHRVLASAQQGVLLREGMSVVILGRPNAGKSSLLNALSGRESAIVTDIAGTTRDIVKEEIQIDGMPLHVLDTAGLREATDAVEQIGIQRAWAAIEEADRILVMVQANEAIHPEDQAILEKMPSHIPVTLIHNKIDLIEKSPELSENDGETEIWLSAKHHLGLDLLKQHLKTEMGYAQTEEGVFMARKRHLEALETALHFVETGQQQLEHFAAGELLAEDLRQAQQALSEITGQFTSDDLLGRIFTSFCIGK.

(6S)-5-formyl-5,6,7,8-tetrahydrofolate is bound by residues Arg25, Glu82, and Lys121. Residues 217–374 form the TrmE-type G domain; it reads GMSVVILGRP…LKQHLKTEMG (158 aa). Residue Asn227 participates in K(+) binding. GTP is bound by residues 227-232, 246-252, and 271-274; these read NAGKSS, TDIAGTT, and DTAG. Residue Ser231 participates in Mg(2+) binding. K(+)-binding residues include Thr246, Ile248, and Thr251. Thr252 is a binding site for Mg(2+). Position 451 (Lys451) interacts with (6S)-5-formyl-5,6,7,8-tetrahydrofolate.

This sequence belongs to the TRAFAC class TrmE-Era-EngA-EngB-Septin-like GTPase superfamily. TrmE GTPase family. In terms of assembly, homodimer. Heterotetramer of two MnmE and two MnmG subunits. Requires K(+) as cofactor.

The protein resides in the cytoplasm. Exhibits a very high intrinsic GTPase hydrolysis rate. Involved in the addition of a carboxymethylaminomethyl (cmnm) group at the wobble position (U34) of certain tRNAs, forming tRNA-cmnm(5)s(2)U34. The chain is tRNA modification GTPase MnmE from Hydrogenovibrio crunogenus (strain DSM 25203 / XCL-2) (Thiomicrospira crunogena).